A 340-amino-acid polypeptide reads, in one-letter code: Probable dual-specificity RNA methyltransferase RlmN (340 aa).

Residue Glu90 is the Proton acceptor of the active site. Residues 97 to 325 (QVSRKTACLS…PVTRRYQRGN (229 aa)) form the Radical SAM core domain. An intrachain disulfide couples Cys104 to Cys331. Positions 111, 115, and 118 each coordinate [4Fe-4S] cluster. S-adenosyl-L-methionine is bound by residues 157-158 (GE), Ser189, 212-214 (SLT), and Asn288. Cys331 (S-methylcysteine intermediate) is an active-site residue.

This sequence belongs to the radical SAM superfamily. RlmN family. Requires [4Fe-4S] cluster as cofactor.

It is found in the cytoplasm. It catalyses the reaction adenosine(2503) in 23S rRNA + 2 reduced [2Fe-2S]-[ferredoxin] + 2 S-adenosyl-L-methionine = 2-methyladenosine(2503) in 23S rRNA + 5'-deoxyadenosine + L-methionine + 2 oxidized [2Fe-2S]-[ferredoxin] + S-adenosyl-L-homocysteine. It carries out the reaction adenosine(37) in tRNA + 2 reduced [2Fe-2S]-[ferredoxin] + 2 S-adenosyl-L-methionine = 2-methyladenosine(37) in tRNA + 5'-deoxyadenosine + L-methionine + 2 oxidized [2Fe-2S]-[ferredoxin] + S-adenosyl-L-homocysteine. In terms of biological role, specifically methylates position 2 of adenine 2503 in 23S rRNA and position 2 of adenine 37 in tRNAs. This Treponema pallidum (strain Nichols) protein is Probable dual-specificity RNA methyltransferase RlmN.